Here is a 330-residue protein sequence, read N- to C-terminus: D-alanine--D-alanine ligase (330 aa).

The ATP-grasp domain occupies 122–323 (NRFLSGFGIR…MKEVLCTIIR (202 aa)). Residue 151 to 206 (TARMGLPLFVKPNVGGSSIATTKVVEAAQLLPAIGQAFSEGEEVMIERLICGTEVT) participates in ATP binding. Mg(2+) contacts are provided by Asp-277, Glu-290, and Asn-292.

It belongs to the D-alanine--D-alanine ligase family. Requires Mg(2+) as cofactor. The cofactor is Mn(2+).

The protein resides in the cytoplasm. It carries out the reaction 2 D-alanine + ATP = D-alanyl-D-alanine + ADP + phosphate + H(+). It participates in cell wall biogenesis; peptidoglycan biosynthesis. Cell wall formation. The chain is D-alanine--D-alanine ligase from Porphyromonas gingivalis (strain ATCC 33277 / DSM 20709 / CIP 103683 / JCM 12257 / NCTC 11834 / 2561).